The primary structure comprises 456 residues: Methionine aminopeptidase 2 (456 aa).

Pro residues predominate over residues Met1 to Pro11. Positions Met1–Arg127 are disordered. Positions Glu31–Glu45 are enriched in acidic residues. Positions Lys66–Lys79 are enriched in basic residues. Substrate is bound at residue His209. A divalent metal cation contacts are provided by Asp229, Asp240, and His309. His317 is a substrate binding site. A divalent metal cation contacts are provided by Glu343 and Glu437.

This sequence belongs to the peptidase M24A family. Methionine aminopeptidase eukaryotic type 2 subfamily. It depends on Co(2+) as a cofactor. The cofactor is Zn(2+). Mn(2+) serves as cofactor. Requires Fe(2+) as cofactor.

It is found in the cytoplasm. It catalyses the reaction Release of N-terminal amino acids, preferentially methionine, from peptides and arylamides.. Cotranslationally removes the N-terminal methionine from nascent proteins. The N-terminal methionine is often cleaved when the second residue in the primary sequence is small and uncharged (Met-Ala-, Cys, Gly, Pro, Ser, Thr, or Val). The chain is Methionine aminopeptidase 2 from Puccinia graminis f. sp. tritici (strain CRL 75-36-700-3 / race SCCL) (Black stem rust fungus).